A 299-amino-acid chain; its full sequence is Fluorinase (299 aa).

Residues aspartate 15, 20–22 (DDS), tyrosine 76, serine 157, aspartate 210, asparagine 215, 269–270 (SR), and 277–279 (RNA) contribute to the S-adenosyl-L-methionine site.

Belongs to the SAM hydrolase / SAM-dependent halogenase family.

It catalyses the reaction fluoride + S-adenosyl-L-methionine = 5'-deoxy-5'-fluoroadenosine + L-methionine. Its activity is regulated as follows. Activity is not severely affected by most metal ions (Mg(2+), Mn(2+), Co(2+) and Fe(2+)), but both Cu(2+) and Zn(2+) are strong inhibitors. In terms of biological role, catalyzes the formation of a C-F bond by combining S-adenosyl-L-methionine (SAM) and fluoride to generate 5'-fluoro-5'-deoxyadenosine (5'-FDA) and L-methionine. This Actinopolyspora mzabensis protein is Fluorinase.